The primary structure comprises 483 residues: 6-phosphogluconate dehydrogenase, decarboxylating (483 aa).

NADP(+) contacts are provided by residues glycine 10–glycine 15 and asparagine 33–threonine 35. Lysine 38 carries the post-translational modification N6-acetyllysine. A Phosphoserine modification is found at serine 57. An N6-acetyllysine modification is found at lysine 59. NADP(+)-binding positions include valine 75 to alanine 77 and asparagine 103. Residues asparagine 103 and serine 129–glycine 131 each bind substrate. Serine 129 bears the Phosphoserine mark. Residue lysine 184 is the Proton acceptor of the active site. Histidine 187–asparagine 188 is a substrate binding site. Glutamate 191 serves as the catalytic Proton donor. Positions 192, 261, 288, 447, and 453 each coordinate substrate. Residue serine 478–tyrosine 481 participates in NADP(+) binding.

This sequence belongs to the 6-phosphogluconate dehydrogenase family. Homodimer.

It localises to the cytoplasm. The catalysed reaction is 6-phospho-D-gluconate + NADP(+) = D-ribulose 5-phosphate + CO2 + NADPH. It functions in the pathway carbohydrate degradation; pentose phosphate pathway; D-ribulose 5-phosphate from D-glucose 6-phosphate (oxidative stage): step 3/3. Functionally, catalyzes the oxidative decarboxylation of 6-phosphogluconate to ribulose 5-phosphate and CO(2), with concomitant reduction of NADP to NADPH. The protein is 6-phosphogluconate dehydrogenase, decarboxylating of Rattus norvegicus (Rat).